Reading from the N-terminus, the 154-residue chain is Ribonuclease H (154 aa).

Residues 1–142 (MTKQVEIFTD…CDELARQGAN (142 aa)) form the RNase H type-1 domain. Aspartate 10, glutamate 48, aspartate 70, and aspartate 134 together coordinate Mg(2+).

The protein belongs to the RNase H family. In terms of assembly, monomer. It depends on Mg(2+) as a cofactor.

It localises to the cytoplasm. The enzyme catalyses Endonucleolytic cleavage to 5'-phosphomonoester.. In terms of biological role, endonuclease that specifically degrades the RNA of RNA-DNA hybrids. This chain is Ribonuclease H, found in Yersinia pestis bv. Antiqua (strain Antiqua).